A 312-amino-acid polypeptide reads, in one-letter code: Formimidoylglutamase (312 aa).

Positions 123, 152, 154, 156, 243, and 245 each coordinate Mn(2+).

The protein belongs to the arginase family. Mn(2+) serves as cofactor.

The enzyme catalyses N-formimidoyl-L-glutamate + H2O = formamide + L-glutamate. The protein operates within amino-acid degradation; L-histidine degradation into L-glutamate; L-glutamate from N-formimidoyl-L-glutamate (hydrolase route): step 1/1. Catalyzes the conversion of N-formimidoyl-L-glutamate to L-glutamate and formamide. This chain is Formimidoylglutamase, found in Pseudomonas fluorescens (strain ATCC BAA-477 / NRRL B-23932 / Pf-5).